We begin with the raw amino-acid sequence, 456 residues long: Solute carrier family 38 member 6 (456 aa).

Met-1 carries the post-translational modification N-acetylmethionine. A phosphoserine mark is found at Ser-4 and Ser-7. A run of 5 helical transmembrane segments spans residues 42 to 62 (SPGV…MGSG), 85 to 105 (VALL…QTAV), 111 to 131 (LGLF…IIIQ), 170 to 190 (LLII…KIGF), and 191 to 211 (LGYT…VVII). A disulfide bridge links Cys-218 with Cys-238. N-linked (GlcNAc...) asparagine glycosylation occurs at Asn-233. Residues 250–270 (AYALPTMAFSFLCHTSILPIY) traverse the membrane as a helical segment. N-linked (GlcNAc...) asparagine glycosylation is present at Asn-283. Helical transmembrane passes span 288–308 (AIAL…LTFY), 327–347 (VVVM…VPLI), 371–391 (FLIT…VPDI), 394–414 (VFGV…PGLF), and 431–451 (AFVL…LIIF).

It belongs to the amino acid/polyamine transporter 2 family.

The protein localises to the cell membrane. Its subcellular location is the synapse. The enzyme catalyses L-glutamine(out) = L-glutamine(in). It carries out the reaction L-glutamate(out) = L-glutamate(in). Its function is as follows. Amino acid transporter with an apparent selectivity for L-glutamine and L-glutamate. May facilitate glutamine uptake in excitatory neurons. The transport mechanism remains to be elucidated. This is Solute carrier family 38 member 6 from Homo sapiens (Human).